The primary structure comprises 81 residues: Sulfur carrier protein TusA (81 aa).

The active-site Cysteine persulfide intermediate is the cysteine 19.

The protein belongs to the sulfur carrier protein TusA family. Interacts with IscS.

The protein localises to the cytoplasm. Its pathway is tRNA modification. In terms of biological role, sulfur carrier protein involved in sulfur trafficking in the cell. Part of a sulfur-relay system required for 2-thiolation during synthesis of 2-thiouridine of the modified wobble base 5-methylaminomethyl-2-thiouridine (mnm(5)s(2)U) in tRNA. Interacts with IscS and stimulates its cysteine desulfurase activity. Accepts an activated sulfur from IscS, which is then transferred to TusD, and thus determines the direction of sulfur flow from IscS to 2-thiouridine formation. Also appears to be involved in sulfur transfer for the biosynthesis of molybdopterin. The sequence is that of Sulfur carrier protein TusA from Escherichia coli O17:K52:H18 (strain UMN026 / ExPEC).